Here is a 463-residue protein sequence, read N- to C-terminus: Chromosomal replication initiator protein DnaA (463 aa).

The segment at 1–83 is domain I, interacts with DnaA modulators; sequence MSTNQIILTD…LQLFQHYNNT (83 aa). The segment at 83-124 is domain II; it reads TIKSIEIITKELPGITQTVIALPTKTFADIGSSELNAENIFS. A domain III, AAA+ region region spans residues 125–343; it reads TLDVRFTFDN…GALNKVIAHS (219 aa). ATP is bound by residues G171, G173, K174, and T175. A domain IV, binds dsDNA region spans residues 344–463; the sequence is NFTLKEITLE…INLLMKILQN (120 aa).

The protein belongs to the DnaA family. In terms of assembly, oligomerizes as a right-handed, spiral filament on DNA at oriC.

The protein resides in the cytoplasm. In terms of biological role, plays an essential role in the initiation and regulation of chromosomal replication. ATP-DnaA binds to the origin of replication (oriC) to initiate formation of the DNA replication initiation complex once per cell cycle. Binds the DnaA box (a 9 base pair repeat at the origin) and separates the double-stranded (ds)DNA. Forms a right-handed helical filament on oriC DNA; dsDNA binds to the exterior of the filament while single-stranded (ss)DNA is stabiized in the filament's interior. The ATP-DnaA-oriC complex binds and stabilizes one strand of the AT-rich DNA unwinding element (DUE), permitting loading of DNA polymerase. After initiation quickly degrades to an ADP-DnaA complex that is not apt for DNA replication. Binds acidic phospholipids. This is Chromosomal replication initiator protein DnaA from Rickettsia massiliae (strain Mtu5).